We begin with the raw amino-acid sequence, 705 residues long: Cell cycle serine/threonine-protein kinase CDC5/MSD2 (705 aa).

Position 23 is a phosphothreonine (Thr23). Residues 41–53 are compositionally biased toward basic and acidic residues; sequence QTKRLDPNNDHHH. The tract at residues 41–63 is disordered; the sequence is QTKRLDPNNDHHHQPAQKKKREK. The Protein kinase domain maps to 82–337; it reads YHRGHFLGEG…LTEIMDYVWF (256 aa). Residues 88–96 and Lys110 each bind ATP; that span reads LGEGGFARC. The active-site Proton acceptor is the Asp204. At Ser419 the chain carries Phosphoserine. In terms of domain architecture, POLO box 1 spans 513 to 595; it reads IVTKWVDYSN…VDFFAKYMKA (83 aa). Glu553, His569, His609, and Asp612 together coordinate Zn(2+). A POLO box 2 domain is found at 614-700; the sequence is FLRRYTRYKP…IKEGLKQKST (87 aa).

This sequence belongs to the protein kinase superfamily. Ser/Thr protein kinase family. CDC5/Polo subfamily. As to quaternary structure, interacts with CDC48; the interaction is likely to result in CDC5 degradation. Interacts with CSA1.

It localises to the cytoplasm. The protein localises to the cytoskeleton. The protein resides in the microtubule organizing center. It is found in the spindle pole body. The catalysed reaction is L-seryl-[protein] + ATP = O-phospho-L-seryl-[protein] + ADP + H(+). It catalyses the reaction L-threonyl-[protein] + ATP = O-phospho-L-threonyl-[protein] + ADP + H(+). Its function is as follows. Protein kinase required for the cell cycle where it is involved in mitotic exit. A component of the fear (CDC14 early anaphase release) network which promotes CDC14 release from the nucleolus during early anaphase. Phosphorylates SCC1/MCD1 and NET1. The polypeptide is Cell cycle serine/threonine-protein kinase CDC5/MSD2 (CDC5) (Saccharomyces cerevisiae (strain ATCC 204508 / S288c) (Baker's yeast)).